The primary structure comprises 1005 residues: Regulator of telomere elongation helicase 1 homolog (1005 aa).

A Helicase ATP-binding domain is found at alanine 7–alanine 322. Position 42 to 49 (serine 42 to threonine 49) interacts with ATP. [4Fe-4S] cluster contacts are provided by cysteine 145, cysteine 163, cysteine 172, and cysteine 208. The short motif at aspartate 251–histidine 254 is the DEAH box element. Threonine 876 carries the phosphothreonine modification. The segment at asparagine 893–serine 917 is disordered.

Belongs to the helicase family. RAD3/XPD subfamily.

Its subcellular location is the nucleus. It catalyses the reaction ATP + H2O = ADP + phosphate + H(+). In terms of biological role, a probable ATP-dependent DNA helicase implicated in DNA repair and the maintenance of genomic stability. Acts as an anti-recombinase to counteract toxic recombination and limit crossover during meiosis. Regulates meiotic recombination and crossover homeostasis by physically dissociating strand invasion events and thereby promotes noncrossover repair by meiotic synthesis dependent strand annealing (SDSA) as well as disassembly of D loop recombination intermediates. This is Regulator of telomere elongation helicase 1 homolog from Drosophila virilis (Fruit fly).